We begin with the raw amino-acid sequence, 388 residues long: Mannitol-1-phosphate 5-dehydrogenase (388 aa).

5-16 (AIQFGGGNIGRG) contributes to the NAD(+) binding site. Lysine 213 is a catalytic residue.

This sequence belongs to the mannitol dehydrogenase family. As to quaternary structure, monomer.

It catalyses the reaction D-mannitol 1-phosphate + NAD(+) = beta-D-fructose 6-phosphate + NADH + H(+). Catalyzes the NAD(H)-dependent interconversion of D-fructose 6-phosphate and D-mannitol 1-phosphate in the mannitol metabolic pathway. Has a strong preference for NADH over NADPH. Required for protection of conidiospores against exogenous stresses such as high temperatures and an oxidative environment. In Aspergillus niger, this protein is Mannitol-1-phosphate 5-dehydrogenase (mpdA).